Reading from the N-terminus, the 201-residue chain is Recombination protein RecR (201 aa).

The segment at 60-75 (CSRCGNVDTVDPCTVC) adopts a C4-type zinc-finger fold. Residues 83 to 178 (SVIIVVEDVS…KITRLAHGVP (96 aa)) enclose the Toprim domain.

It belongs to the RecR family.

Functionally, may play a role in DNA repair. It seems to be involved in an RecBC-independent recombinational process of DNA repair. It may act with RecF and RecO. The polypeptide is Recombination protein RecR (Rhizobium etli (strain ATCC 51251 / DSM 11541 / JCM 21823 / NBRC 15573 / CFN 42)).